Here is a 131-residue protein sequence, read N- to C-terminus: Small ribosomal subunit protein uS8 (131 aa).

The protein belongs to the universal ribosomal protein uS8 family. In terms of assembly, part of the 30S ribosomal subunit. Contacts proteins S5 and S12.

Its function is as follows. One of the primary rRNA binding proteins, it binds directly to 16S rRNA central domain where it helps coordinate assembly of the platform of the 30S subunit. This chain is Small ribosomal subunit protein uS8, found in Paraburkholderia phymatum (strain DSM 17167 / CIP 108236 / LMG 21445 / STM815) (Burkholderia phymatum).